The primary structure comprises 433 residues: uncharacterized protein (433 aa).

The protein belongs to the mimivirus R160 family.

The protein localises to the virion. This is an uncharacterized protein from Acanthamoeba polyphaga mimivirus (APMV).